An 872-amino-acid polypeptide reads, in one-letter code: Alanine--tRNA ligase (872 aa).

His567, His571, Cys669, and His673 together coordinate Zn(2+).

The protein belongs to the class-II aminoacyl-tRNA synthetase family. The cofactor is Zn(2+).

It is found in the cytoplasm. It carries out the reaction tRNA(Ala) + L-alanine + ATP = L-alanyl-tRNA(Ala) + AMP + diphosphate. Catalyzes the attachment of alanine to tRNA(Ala) in a two-step reaction: alanine is first activated by ATP to form Ala-AMP and then transferred to the acceptor end of tRNA(Ala). Also edits incorrectly charged Ser-tRNA(Ala) and Gly-tRNA(Ala) via its editing domain. This Streptococcus thermophilus (strain CNRZ 1066) protein is Alanine--tRNA ligase.